A 602-amino-acid polypeptide reads, in one-letter code: Chaperone protein DnaK (602 aa).

Residue T199 is modified to Phosphothreonine; by autocatalysis.

It belongs to the heat shock protein 70 family.

In terms of biological role, acts as a chaperone. The chain is Chaperone protein DnaK from Carsonella ruddii (strain PV).